The following is a 357-amino-acid chain: Geranylgeranyl pyrophosphate synthase spyE (357 aa).

Positions 36–60 (EAQSQAVPGTRTETEPTGSSPSDLQ) are disordered. Over residues 50-59 (EPTGSSPSDL) the composition is skewed to polar residues. Lys84, Arg87, and His116 together coordinate isopentenyl diphosphate. Mg(2+) contacts are provided by Asp123 and Asp127. Arg132 is a dimethylallyl diphosphate binding site. Arg133 provides a ligand contact to isopentenyl diphosphate. Residues Lys210, Thr211, and Gln244 each coordinate dimethylallyl diphosphate. Mg(2+) is bound at residue Asp247. Positions 251, 261, and 271 each coordinate dimethylallyl diphosphate.

Belongs to the FPP/GGPP synthase family. Requires Mg(2+) as cofactor.

The catalysed reaction is isopentenyl diphosphate + dimethylallyl diphosphate = (2E)-geranyl diphosphate + diphosphate. The enzyme catalyses isopentenyl diphosphate + (2E)-geranyl diphosphate = (2E,6E)-farnesyl diphosphate + diphosphate. It catalyses the reaction isopentenyl diphosphate + (2E,6E)-farnesyl diphosphate = (2E,6E,10E)-geranylgeranyl diphosphate + diphosphate. It functions in the pathway secondary metabolite biosynthesis; terpenoid biosynthesis. Geranylgeranyl pyrophosphate synthase; part of the gene cluster that mediates the biosynthesis of meroterpenoids called sartorypyrones. Within the pathway, spyE provides the spyF cosubstrate geranylgeranyl pyrophosphate (GGPP) for the prenylation of triacetic acid lactone (TAL). The biosynthesis of sartorypyrones begins with the production of triacetic acid lactone (TAL) by the NR-PKS spyA using one molecule of acetyl-CoA and two molecules of malonyl-CoA. The prenyltransferase spyF then conjugates geranylgeranyl pyrophosphate (GGPP) to TAL to form geranylgeranyl-triacetate lactone, for which the pathway-specific geranylgeranyl pyrophosphate synthase (GGPS) spyE is required to provide GGPP. Subsequently, geranylgeranyl-triacetate lactone is epoxidized at the terminal olein by the FAD-dependent monooxygenase spyC, followed by cyclization of the terpenoid component catalyzed by the terpene cyclase spyD to produce both the bicyclic sartorypyrone F and the monocyclic sartorypyrone D. Finally, the last step of the biosynthesis involves the acetylation of the meroterpenoids sartorypyrones D and F by the acetyltransferase SpyB to produce sartorypyrones A and G, respectively. The chain is Geranylgeranyl pyrophosphate synthase spyE from Aspergillus fumigatus (strain ATCC MYA-4609 / CBS 101355 / FGSC A1100 / Af293) (Neosartorya fumigata).